A 341-amino-acid polypeptide reads, in one-letter code: Protein BIG GRAIN 1-like C (341 aa).

Disordered regions lie at residues 28-61 (DGLQSDLKGSINENVSSSSSSPSPNKKDDKLTTL) and 76-138 (SSTT…SDDD). Basic and acidic residues predominate over residues 52 to 61 (NKKDDKLTTL). Residues 76–92 (SSTTTTNSSDSSSFSSS) are compositionally biased toward low complexity. Over residues 105–138 (KLAEQGKRSGDERQRTKRTVMDNDSRLFSKSDDD) the composition is skewed to basic and acidic residues.

It belongs to the BIG GRAIN 1 (BG1) plant protein family.

It is found in the cell membrane. Functionally, involved in auxin transport. Regulator of the auxin signaling pathway. This Arabidopsis thaliana (Mouse-ear cress) protein is Protein BIG GRAIN 1-like C.